The primary structure comprises 172 residues: 3-hydroxydecanoyl-[acyl-carrier-protein] dehydratase (172 aa).

Histidine 71 is an active-site residue.

Belongs to the thioester dehydratase family. FabA subfamily. Homodimer.

The protein resides in the cytoplasm. It catalyses the reaction a (3R)-hydroxyacyl-[ACP] = a (2E)-enoyl-[ACP] + H2O. It carries out the reaction (3R)-hydroxydecanoyl-[ACP] = (2E)-decenoyl-[ACP] + H2O. The enzyme catalyses (2E)-decenoyl-[ACP] = (3Z)-decenoyl-[ACP]. Its pathway is lipid metabolism; fatty acid biosynthesis. Necessary for the introduction of cis unsaturation into fatty acids. Catalyzes the dehydration of (3R)-3-hydroxydecanoyl-ACP to E-(2)-decenoyl-ACP and then its isomerization to Z-(3)-decenoyl-ACP. Can catalyze the dehydratase reaction for beta-hydroxyacyl-ACPs with saturated chain lengths up to 16:0, being most active on intermediate chain length. This Edwardsiella ictaluri (strain 93-146) protein is 3-hydroxydecanoyl-[acyl-carrier-protein] dehydratase.